The following is a 313-amino-acid chain: MGGRLPFNQSFWEEFLMGREGSLPNLPEISHVSKRVVRILGGNPGSMHLQGTNTYLVGTGRSRILIDTAQGLPAWIHRISSFLFTHNIELSYVLLTHWHGDHTGGVPDLIAHNPLLTNKIYKNNPDAGQNTITDGQIFSVNGATVRAVFTPGHSVDHMCFVLEEENALFTGDNVLGHGFSVAQDLGCYMDSLRNMSALACGLGYPAHGAIIENLPGKLDEYIQHREGRERMMLSTLTKELVQGQERRGEGTKGGLTLNEIVISIYGRLPQEVIEKALAPSLLQVLWKLTEDRRVGFKPGDPLKRQWFALISVE.

Residues H97, H99, D101, and H102 each contribute to the Zn(2+) site. D101 serves as the catalytic Proton donor/acceptor.

This sequence belongs to the metallo-beta-lactamase superfamily. It depends on Zn(2+) as a cofactor.

It participates in secondary metabolite biosynthesis. Its function is as follows. Lactamase-like protein; part of the gene cluster that mediates the biosynthesis of neosartoricin B, a prenylated anthracenone that probably exhibits T-cell antiproliferative activity, suggestive of a physiological role as an immunosuppressive agent. The non-reducing polyketide synthase nscA probably synthesizes and cyclizes the decaketide backbone. The hydrolase nscB then mediates the product release through hydrolysis followed by spontaneous decarboxylation. The prenyltransferase nscD catalyzes the addition of the dimethylallyl group to the aromatic C5. The FAD-dependent monooxygenase nscC is then responsible for the stereospecific hydroxylation at C2. Neosartoricin B can be converted into two additional compounds neosartoricins C and D. Neosartoricin C is a spirocyclic compound that is cyclized through the attack of C3 hydroxyl on C14, followed by dehydration. On the other hand, neosartoricin D is a further cyclized compound in which attack of C2 on C14 in neosartoricin C results in the formation of the acetal-containing dioxabicyclo-octanone ring. Both of these compounds are novel and possibly represent related metabolites of the gene cluster. In Arthroderma gypseum (strain ATCC MYA-4604 / CBS 118893) (Microsporum gypseum), this protein is Lactamase-like protein nscB.